Reading from the N-terminus, the 536-residue chain is Zinc finger protein 623 (536 aa).

The disordered stretch occupies residues 57–77 (GELLGNPEGQSLGSSPSQDRG). Residues 64–74 (EGQSLGSSPSQ) are compositionally biased toward polar residues. 13 consecutive C2H2-type zinc fingers follow at residues 123-145 (NPCDICGKTFTFNSDLVRHRISH), 151-173 (YTCDQCGKGFGQSSHLMEHQRIH), 179-201 (YVCNVCGKDFIHYSGLIEHQRVH), 207-229 (FKCAQCGKAFCHSSDLIRHQRVH), 235-257 (FECKECGKGFSQSSLLIRHQRIH), 263-285 (YECNECGKSFIRSSSLIRHYQIH), 291-313 (YECKECGKAFRHRSDLIEHQRIH), 319-341 (FECNECGKAFIRSSKLIQHQRIH), 347-369 (YVCNECGKRFSQTSNFTQHQRIH), 375-397 (YECNECGKAFFLSSYLIRHQKIH), 403-425 (YECKECGKAFLQKAHLTEHQKIH), 431-453 (FECKDCGKAFIQSSKLLLHQIIH), and 459-481 (YVCSYCGKGFIQRSNFLQHQKIH). Lysine 445 is covalently cross-linked (Glycyl lysine isopeptide (Lys-Gly) (interchain with G-Cter in SUMO2)). A disordered region spans residues 513-536 (LSLSKAPIHLGERSVDKGEHTGNL). Over residues 522–536 (LGERSVDKGEHTGNL) the composition is skewed to basic and acidic residues.

The protein belongs to the krueppel C2H2-type zinc-finger protein family.

It is found in the nucleus. May be involved in transcriptional regulation. In Homo sapiens (Human), this protein is Zinc finger protein 623 (ZNF623).